A 179-amino-acid polypeptide reads, in one-letter code: Large ribosomal subunit protein uL5 (179 aa).

This sequence belongs to the universal ribosomal protein uL5 family. Part of the 50S ribosomal subunit; part of the 5S rRNA/L5/L18/L25 subcomplex. Contacts the 5S rRNA and the P site tRNA. Forms a bridge to the 30S subunit in the 70S ribosome.

This is one of the proteins that bind and probably mediate the attachment of the 5S RNA into the large ribosomal subunit, where it forms part of the central protuberance. In the 70S ribosome it contacts protein S13 of the 30S subunit (bridge B1b), connecting the 2 subunits; this bridge is implicated in subunit movement. Contacts the P site tRNA; the 5S rRNA and some of its associated proteins might help stabilize positioning of ribosome-bound tRNAs. The polypeptide is Large ribosomal subunit protein uL5 (Glaesserella parasuis serovar 5 (strain SH0165) (Haemophilus parasuis)).